The following is a 649-amino-acid chain: Leucine-rich repeat transmembrane protein FLRT3 (649 aa).

The first 28 residues, Met1–Ala28, serve as a signal peptide directing secretion. The LRRNT domain maps to Lys29 to Glu58. The Extracellular segment spans residues Lys29–Pro528. Intrachain disulfides connect Cys31/Cys37 and Cys35/Cys44. The interaction with ADGRL3 stretch occupies residues Asp38–Asn67. LRR repeat units lie at residues Asp59 to Lys80, Lys84 to Lys104, Tyr105 to Lys126, Tyr129 to Phe150, Tyr155 to Thr176, Ile177 to Gly197, Ser200 to Val220, Asn226 to Thr247, Ser248 to Tyr269, and Gln272 to Asp293. A glycan (N-linked (GlcNAc...) asparagine) is linked at Asn226. Residues Asn282 and Asn296 are each glycosylated (N-linked (GlcNAc...) asparagine). The 53-residue stretch at Asn305 to Asp357 folds into the LRRCT domain. Cys309 and Cys334 form a disulfide bridge. The tract at residues Gln378–Ser405 is disordered. Over residues Pro389–Arg401 the composition is skewed to basic and acidic residues. Residues Ser405–Leu504 form the Fibronectin type-III domain. The chain crosses the membrane as a helical span at residues Leu529–Cys549. The Cytoplasmic portion of the chain corresponds to Trp550–Ser649. Residues Glu629–Ser649 are disordered.

In terms of assembly, monomer and homodimer. Self-associates (via leucine-rich repeats), giving rise to homooligomers. Interacts with FGFR1. Interacts (via extracellular domain) with ADGRL1/LPHN1 and ADGRL3 (via olfactomedin-like domain). Interacts (via extracellular domain) with LPHN2 (via olfactomedin-like domain). Interacts (via extracellular domain) with UNC5B (via Ig domain). May also interact (via extracellular domain) with UNC5A and UNC5C. Interacts (via extracellular domain) with UNC5D (via extracellular domain). Identified in complexes composed of FLRT3, ADGRL3 and UNC5B, respectively FLRT3, ADGRL3 and UNC5D. Interacts (via cytoplasmic domain) with ROBO1. In terms of processing, N-glycosylated. Proteolytic cleavage in the juxtamembrane region gives rise to a soluble ectodomain. Cleavage is probably effected by a metalloprotease. In terms of tissue distribution, detected in brain (at protein level). Detected in brain neurons, especially in basal ganglia, hippocampus dentate gyrus and CA3 region, cerebellum and in olfactory bulb.

Its subcellular location is the cell membrane. The protein localises to the presynaptic cell membrane. It is found in the synapse. The protein resides in the synaptosome. It localises to the postsynaptic density. Its subcellular location is the cell projection. The protein localises to the dendrite. It is found in the axon. The protein resides in the growth cone membrane. It localises to the cytoplasmic vesicle. Its subcellular location is the endoplasmic reticulum membrane. The protein localises to the cell junction. It is found in the focal adhesion. The protein resides in the secreted. Its function is as follows. Functions in cell-cell adhesion, cell migration and axon guidance, exerting an attractive or repulsive role depending on its interaction partners. Plays a role in the spatial organization of brain neurons. Plays a role in vascular development in the retina. Plays a role in cell-cell adhesion via its interaction with ADGRL3 and probably also other latrophilins that are expressed at the surface of adjacent cells. Interaction with the intracellular domain of ROBO1 mediates axon attraction towards cells expressing NTN1. Mediates axon growth cone collapse and plays a repulsive role in neuron guidance via its interaction with UNC5B, and possibly also other UNC-5 family members. Promotes neurite outgrowth (in vitro). Mediates cell-cell contacts that promote an increase both in neurite number and in neurite length. Plays a role in the regulation of the density of glutamaergic synapses. Plays a role in fibroblast growth factor-mediated signaling cascades. Required for normal morphogenesis during embryonic development, but not for normal embryonic patterning. Required for normal ventral closure, headfold fusion and definitive endoderm migration during embryonic development. Required for the formation of a normal basement membrane and the maintenance of a normal anterior visceral endoderm during embryonic development. This Rattus norvegicus (Rat) protein is Leucine-rich repeat transmembrane protein FLRT3 (Flrt3).